The sequence spans 138 residues: Phospholipase A2 group V (138 aa).

The N-terminal stretch at 1 to 20 is a signal peptide; sequence MKGLLPLAWFLACSVPAVQG. Disulfide bonds link C46–C137, C48–C64, C63–C117, C70–C110, C79–C103, and C97–C108. Positions 47, 49, and 51 each coordinate Ca(2+). H67 is an active-site residue. Residue D68 coordinates Ca(2+). D111 is an active-site residue.

It belongs to the phospholipase A2 family. Requires Ca(2+) as cofactor. Post-translationally, this enzyme lacks one of the seven disulfide bonds found in similar PLA2 proteins. In terms of tissue distribution, heart, placenta and less abundantly, in lung. Detected in the outer and inner plexiform layers of the retina (at protein level). Expressed in monocytes and macrophages.

The protein localises to the secreted. Its subcellular location is the cell membrane. The protein resides in the cytoplasmic vesicle. It localises to the phagosome. It is found in the recycling endosome. The protein localises to the golgi apparatus. Its subcellular location is the cis-Golgi network. The protein resides in the trans-Golgi network. The catalysed reaction is a 1,2-diacyl-sn-glycero-3-phosphocholine + H2O = a 1-acyl-sn-glycero-3-phosphocholine + a fatty acid + H(+). It catalyses the reaction 1-hexadecanoyl-2-(9Z-octadecenoyl)-sn-glycero-3-phosphocholine + H2O = 1-hexadecanoyl-sn-glycero-3-phosphocholine + (9Z)-octadecenoate + H(+). It carries out the reaction 1-hexadecanoyl-2-(5Z,8Z,11Z,14Z-eicosatetraenoyl)-sn-glycero-3-phosphocholine + H2O = 1-hexadecanoyl-sn-glycero-3-phosphocholine + (5Z,8Z,11Z,14Z)-eicosatetraenoate + H(+). The enzyme catalyses 1-hexadecanoyl-2-(9Z,12Z-octadecadienoyl)-sn-glycero-3-phosphoethanolamine + H2O = 1-hexadecanoyl-sn-glycero-3-phosphoethanolamine + (9Z,12Z)-octadecadienoate + H(+). The catalysed reaction is 1-hexadecanoyl-2-(5Z,8Z,11Z,14Z-eicosatetraenoyl)-sn-glycero-3-phosphoethanolamine + H2O = 1-hexadecanoyl-sn-glycero-3-phosphoethanolamine + (5Z,8Z,11Z,14Z)-eicosatetraenoate + H(+). It catalyses the reaction 1-octadecanoyl-2-(5Z,8Z,11Z,14Z-eicosatetraenoyl)-sn-glycero-3-phospho-(1D-myo-inositol) + H2O = 1-octadecanoyl-sn-glycero-3-phospho-(1D-myo-inositol) + (5Z,8Z,11Z,14Z)-eicosatetraenoate + H(+). It carries out the reaction 1-hexadecanoyl-2-(9Z-octadecenoyl)-sn-glycero-3-phosphoglycerol + H2O = 1-hexadecanoyl-sn-glycero-3-phosphoglycerol + (9Z)-octadecenoate + H(+). The enzyme catalyses N-hexadecanoyl-1,2-di-(9Z-octadecenoyl)-sn-glycero-3-phosphoethanolamine + H2O = N-hexadecanoyl-1-(9Z-octadecenoyl)-sn-glycero-3-phosphoethanolamine + (9Z)-octadecenoate + H(+). The catalysed reaction is 1'-[1,2-di-(9Z-octadecenoyl)-sn-glycero-3-phospho]-3'-[1-(9Z-octadecenoyl)-sn-glycero-3-phospho]-glycerol + H2O = 1',3'-bis-[1-(9Z-octadecenoyl)-sn-glycero-3-phospho]-glycerol + (9Z)-octadecenoate + H(+). It catalyses the reaction 1',3'-bis[1,2-di-(9Z-octadecenoyl)-sn-glycero-3-phospho]-glycerol + H2O = 1'-[1,2-di-(9Z-octadecenoyl)-sn-glycero-3-phospho]-3'-[1-(9Z-octadecenoyl)-sn-glycero-3-phospho]-glycerol + (9Z)-octadecenoate + H(+). It participates in lipid metabolism; phospholipid metabolism. Its pathway is lipid metabolism; leukotriene B4 biosynthesis. It functions in the pathway lipid metabolism; leukotriene C4 biosynthesis. With respect to regulation, activated by cardiolipin. In terms of biological role, secretory calcium-dependent phospholipase A2 that primarily targets extracellular phospholipids. Hydrolyzes the ester bond of the fatty acyl group attached at sn-2 position of phospholipids (phospholipase A2 activity), preferentially releasing fatty acyl groups with a low degree of unsaturation such as oleoyl (C18:1) and linoleoyl (C18:2) groups. Hydrolyzes low-density lipoprotein (LDL) phospholipids releasing unsaturated fatty acids that drive macrophage polarization toward an M2 phenotype. May act in an autocrine and paracrine manner. Contributes to lipid remodeling of cellular membranes at different subcellular locations and generation of lipid mediators involved in pathogen clearance. Cleaves sn-2 fatty acyl chains of cardiolipin, a major component of the inner membrane of mitochondria and bacterial membranes. Promotes phagocytosis of bacteria in macrophages through production of lysophosphatidylethanolamines. Displays bactericidal activity against Gram-positive bacteria by directly hydrolyzing phospholipids of the bacterial membrane. Promotes phagocytosis and killing of ingested fungi likely through controlling phagosome-lysosome fusion and phagosome maturation. Plays a role in biosynthesis of cysteinyl leukotrienes (CysLTs) in myeloid cells. In eosinophils, triggers perinuclear arachidonate release and LTC4 synthesis in a PLA2G4A-independent way. In neutrophils, amplifies CysLTs biosynthesis initiated by PLA2G4A. Promotes immune complex clearance in macrophages via stimulating synthesis of CysLTs, which act through CYSLTR1 to trigger phagocytosis. May regulate antigen processing in antigen-presenting cells. In pulmonary macrophages regulates IL33 production required for activation of group 2 innate lymphoid cells. May play a role in the biosynthesis of N-acyl ethanolamines that regulate energy metabolism. Hydrolyzes N-acyl phosphatidylethanolamines to N-acyl lysophosphatidylethanolamines, which are further cleaved by a lysophospholipase D to release N-acyl ethanolamines. The polypeptide is Phospholipase A2 group V (PLA2G5) (Homo sapiens (Human)).